We begin with the raw amino-acid sequence, 30 residues long: Cliotide T19 (30 aa).

The segment at residues 1–30 (GSVIKCGESCLLGKCYTPGCTCSRPICKKN) is a cross-link (cyclopeptide (Gly-Asn)). 3 disulfide bridges follow: Cys6-Cys20, Cys10-Cys22, and Cys15-Cys27.

Contains 3 disulfide bonds. In terms of processing, this is a cyclic peptide. As to expression, expressed in root nodules but not in seed.

In terms of biological role, probably participates in a plant defense mechanism. Active against Gram-negative bacterium E.coli ATCC 700926 (MIC=0.6 uM) under low-salt conditions. Not active against Gram-positive bacterium S.aureus ATCC 12600 up to a concentration of 100 uM under low-salt conditions. Exhibits immunomodulatory activity but no cytotoxicity in vitro. The protein is Cliotide T19 of Clitoria ternatea (Butterfly pea).